Here is an 883-residue protein sequence, read N- to C-terminus: EEF1AKMT4-ECE2 readthrough transcript protein (883 aa).

Residues 1–160 (MASPGAGRAP…VHTVDQVLSE (160 aa)) form a methyltransferase-like region region. The Cytoplasmic segment spans residues 1–178 (MASPGAGRAP…QLLGSRTQLE (178 aa)). The S-adenosyl-L-methionine site is built by Trp-26 and Tyr-30. A Phosphotyrosine modification is found at Tyr-39. Residues Trp-41, Gly-66, 88 to 89 (DY), 113 to 114 (DV), and Lys-130 contribute to the S-adenosyl-L-methionine site. Residues 179–199 (LVLAGASLLLAALLLGCLVAL) form a helical membrane-spanning segment. At 200–883 (GVQYHRDPSH…MNPGQLCEVW (684 aa)) the chain is on the lumenal side. Residues 211 to 883 (TCLTEACIRV…MNPGQLCEVW (673 aa)) enclose the Peptidase M13 domain. 5 disulfides stabilise this stretch: Cys-212–Cys-217, Cys-235–Cys-868, Cys-243–Cys-828, Cys-299–Cys-548, and Cys-757–Cys-880. Residues Asn-279, Asn-283, Asn-324, Asn-384, Asn-429, Asn-496, and Asn-652 are each glycosylated (N-linked (GlcNAc...) asparagine). His-720 provides a ligand contact to Zn(2+). The active site involves Glu-721. His-724 is a Zn(2+) binding site. Asn-745 and Asn-753 each carry an N-linked (GlcNAc...) asparagine glycan. Position 780 (Glu-780) interacts with Zn(2+). The active-site Proton donor is Asp-784.

This sequence in the N-terminal section; belongs to the methyltransferase superfamily. The protein in the C-terminal section; belongs to the peptidase M13 family. Zn(2+) is required as a cofactor.

Its subcellular location is the golgi apparatus membrane. The protein resides in the cytoplasmic vesicle. It localises to the secretory vesicle membrane. The catalysed reaction is Hydrolysis of the 21-Trp-|-Val-22 bond in big endothelin to form endothelin 1.. Its activity is regulated as follows. Inhibited by phosphoramidon. Functionally, converts big endothelin-1 to endothelin-1. May also have methyltransferase activity. May play a role in amyloid-beta processing. This Homo sapiens (Human) protein is EEF1AKMT4-ECE2 readthrough transcript protein.